We begin with the raw amino-acid sequence, 546 residues long: CTP synthase (546 aa).

An amidoligase domain region spans residues 1-266 (MTTRYIFVTG…DQLVTKRFGI (266 aa)). Ser14 lines the CTP pocket. A UTP-binding site is contributed by Ser14. ATP is bound by residues 15–20 (SLGKGI) and Asp72. Residues Asp72 and Glu140 each contribute to the Mg(2+) site. Residues 147–149 (DIE), 187–192 (KTKPTQ), and Lys223 each bind CTP. UTP is bound by residues 187–192 (KTKPTQ) and Lys223. 239–241 (KDV) is a binding site for ATP. Residues 291–542 (TIGMVGKYIE…VAAAYTYQKR (252 aa)) form the Glutamine amidotransferase type-1 domain. Gly352 is a binding site for L-glutamine. Catalysis depends on Cys379, which acts as the Nucleophile; for glutamine hydrolysis. L-glutamine-binding positions include 380 to 383 (LGMQ), Glu403, and Arg470. Residues His515 and Glu517 contribute to the active site.

This sequence belongs to the CTP synthase family. In terms of assembly, homotetramer.

It catalyses the reaction UTP + L-glutamine + ATP + H2O = CTP + L-glutamate + ADP + phosphate + 2 H(+). It carries out the reaction L-glutamine + H2O = L-glutamate + NH4(+). The catalysed reaction is UTP + NH4(+) + ATP = CTP + ADP + phosphate + 2 H(+). It participates in pyrimidine metabolism; CTP biosynthesis via de novo pathway; CTP from UDP: step 2/2. Its activity is regulated as follows. Allosterically activated by GTP, when glutamine is the substrate; GTP has no effect on the reaction when ammonia is the substrate. The allosteric effector GTP functions by stabilizing the protein conformation that binds the tetrahedral intermediate(s) formed during glutamine hydrolysis. Inhibited by the product CTP, via allosteric rather than competitive inhibition. Functionally, catalyzes the ATP-dependent amination of UTP to CTP with either L-glutamine or ammonia as the source of nitrogen. Regulates intracellular CTP levels through interactions with the four ribonucleotide triphosphates. The chain is CTP synthase from Shewanella halifaxensis (strain HAW-EB4).